We begin with the raw amino-acid sequence, 199 residues long: RNA-binding protein, mRNA-processing factor 2a (199 aa).

The RRM domain maps to 20-97 (RTLFVSGLPV…QTLRLEFAKA (78 aa)).

As to quaternary structure, interacts with Bucky ball (BUC); to mediate Balbiani body formation and oocyte polarity during early oogenesis.

It is found in the cytoplasm. It localises to the nucleus. The protein resides in the stress granule. Functionally, RNA-binding protein involved in the regulation of smooth muscle cell differentiation and proliferation in the gastrointestinal system. RNA-binding protein localized in Balbiani body (electron-dense aggregates in the oocyte) and germ plasm during oogenesis, and may be required to maintain germ plasm mRNA translational repression. Translational regulator during topographic map formation in the visual system. Establishes oocyte polarity through interaction with Bucky ball (BUC). Acts as a pre-mRNA alternative splicing regulator. Mediates ACTN1 and FLNB alternative splicing. Likely binds to mRNA tandem CAC trinucleotide or CA dinucleotide motifs. The protein is RNA-binding protein, mRNA-processing factor 2a of Danio rerio (Zebrafish).